Here is a 361-residue protein sequence, read N- to C-terminus: Ribosomal RNA large subunit methyltransferase M (361 aa).

S-adenosyl-L-methionine is bound by residues S187, 220–223 (CPGG), D239, D259, and D276. K305 functions as the Proton acceptor in the catalytic mechanism.

It belongs to the class I-like SAM-binding methyltransferase superfamily. RNA methyltransferase RlmE family. RlmM subfamily. In terms of assembly, monomer.

It is found in the cytoplasm. It catalyses the reaction cytidine(2498) in 23S rRNA + S-adenosyl-L-methionine = 2'-O-methylcytidine(2498) in 23S rRNA + S-adenosyl-L-homocysteine + H(+). Catalyzes the 2'-O-methylation at nucleotide C2498 in 23S rRNA. This chain is Ribosomal RNA large subunit methyltransferase M, found in Shewanella putrefaciens (strain CN-32 / ATCC BAA-453).